Reading from the N-terminus, the 234-residue chain is Small ribosomal subunit protein uS2 (234 aa).

The protein belongs to the universal ribosomal protein uS2 family.

In Prochlorococcus marinus (strain AS9601), this protein is Small ribosomal subunit protein uS2.